The chain runs to 264 residues: Thymidylate synthase (264 aa).

Arginine 21 provides a ligand contact to dUMP. Histidine 51 contacts (6R)-5,10-methylene-5,6,7,8-tetrahydrofolate. 126–127 (RR) serves as a coordination point for dUMP. Cysteine 146 functions as the Nucleophile in the catalytic mechanism. DUMP-binding positions include 166-169 (RSAD), asparagine 177, and 207-209 (HIY). Position 169 (aspartate 169) interacts with (6R)-5,10-methylene-5,6,7,8-tetrahydrofolate. Position 263 (serine 263) interacts with (6R)-5,10-methylene-5,6,7,8-tetrahydrofolate.

Belongs to the thymidylate synthase family. Bacterial-type ThyA subfamily. Homodimer.

Its subcellular location is the cytoplasm. The catalysed reaction is dUMP + (6R)-5,10-methylene-5,6,7,8-tetrahydrofolate = 7,8-dihydrofolate + dTMP. It participates in pyrimidine metabolism; dTTP biosynthesis. Catalyzes the reductive methylation of 2'-deoxyuridine-5'-monophosphate (dUMP) to 2'-deoxythymidine-5'-monophosphate (dTMP) while utilizing 5,10-methylenetetrahydrofolate (mTHF) as the methyl donor and reductant in the reaction, yielding dihydrofolate (DHF) as a by-product. This enzymatic reaction provides an intracellular de novo source of dTMP, an essential precursor for DNA biosynthesis. The sequence is that of Thymidylate synthase from Halalkalibacterium halodurans (strain ATCC BAA-125 / DSM 18197 / FERM 7344 / JCM 9153 / C-125) (Bacillus halodurans).